A 32-amino-acid chain; its full sequence is uncharacterized protein (32 aa).

This is an uncharacterized protein from Schizosaccharomyces pombe (strain 972 / ATCC 24843) (Fission yeast).